The primary structure comprises 864 residues: MPNVLLPPKESNLFKRILKCYEQKQYKNGLKFCKMILSNPKFAEHGETLAMKGLTLNCLGKKEEAYEFVRKGLRNDVKSHVCWHVYGLLQRSDKKYDEAIKCYRNALKLDKDNLQILRDLSLLQIQMRDLEGYRETRYQLLQLRPTQRASWIGYAIAYHLLKDYDMALKLLEEFRQTQQVPPNKIDYEYSELILYQNQVMREADLLQESLEHIEMYEKQICDKLLVEEIKGEILLKLGRLKEASEVFKNLIDRNAENWCYYEGLEKALQISTLEERLQIYEEISKQHPKAITPRRLPLTLVPGERFRELMDKFLRVNFSKGCPPLFTTLKSLYYNTEKVSIIQELVTNYEASLKTCDFFSPYENGEKEPPTTLLWVQYFLAQHFDKLGQYSLALDYINAAIASTPTLIELFYMKAKIYKHIGNLKEAAKWMDEAQSLDTADRFINSKCAKYMLRANMIKEAEEMCSKFTREGTSAMENLNEMQCMWFQTECISAYQRLGRYGDALKKCHEVERHFFEITDDQFDFHTYCMRKMTLRAYVDLLRLEDILRRHAFYFKAARSAIEIYLKLYDNPLTNESKQQEINSENLSAKELKKMLSKQRRAQKKAKLEEERKHAERERQQKNQKKKRDEEEEEASGLKEELIPEKLERVENPLEEAVKFLIPLKNLVADNIDTHLLAFEIYFRKGKFLLMLQSVKRAFAINSNNPWLHECLIRFSKSVSNHSNLPDIVSKVLSQEMQKIFVKKDLESFNEDFLKRNATSLQHLLSGAKMMYFLDKSRQEKAIAIATRLDETIKDKDVKTLIKVSEALLDGSFGNCSSQYEEYRMACHNLLPFTSAFLPAVNEVDNPNVALNHTANYDVLANEI.

TPR repeat units lie at residues 46–79 (GETL…DVKS), 80–113 (HVCW…DKDN), 148–184 (RASW…PPNK), 224–257 (LLVE…NAEN), 374–407 (LWVQ…TPTL), 409–441 (ELFY…DTAD), and 485–518 (MWFQ…FFEI). Residues 603-638 (QKKAKLEEERKHAERERQQKNQKKKRDEEEEEASGL) are disordered. Residues 606–621 (AKLEEERKHAERERQQ) are compositionally biased toward basic and acidic residues.

In terms of assembly, component of the N-terminal acetyltransferase A (NatA) complex composed of NAA10 and NAA16.

Functionally, auxillary subunit of the N-terminal acetyltransferase A (NatA) complex which displays alpha (N-terminal) acetyltransferase activity. This chain is N-alpha-acetyltransferase 16, NatA auxiliary subunit (NAA16), found in Homo sapiens (Human).